The chain runs to 346 residues: Elongation factor Ts (346 aa).

The involved in Mg(2+) ion dislocation from EF-Tu stretch occupies residues 80–83; it reads TDFV.

The protein belongs to the EF-Ts family.

The protein resides in the cytoplasm. Functionally, associates with the EF-Tu.GDP complex and induces the exchange of GDP to GTP. It remains bound to the aminoacyl-tRNA.EF-Tu.GTP complex up to the GTP hydrolysis stage on the ribosome. The chain is Elongation factor Ts from Streptococcus suis (strain 98HAH33).